The sequence spans 145 residues: Peptide methionine sulfoxide reductase MsrB (145 aa).

The MsrB domain maps to 4-127; sequence SDELKQRIGE…NSAALKFIPY (124 aa). The active-site Nucleophile is Cys116.

Belongs to the MsrB Met sulfoxide reductase family.

The catalysed reaction is L-methionyl-[protein] + [thioredoxin]-disulfide + H2O = L-methionyl-(R)-S-oxide-[protein] + [thioredoxin]-dithiol. The protein is Peptide methionine sulfoxide reductase MsrB of Streptococcus pyogenes serotype M3 (strain ATCC BAA-595 / MGAS315).